Here is a 50-residue protein sequence, read N- to C-terminus: Photosystem II reaction center protein M (50 aa).

A helical transmembrane segment spans residues 7–27; sequence GFIISLLFVGIPTIFLVGLYI. A disordered region spans residues 31–50; the sequence is DGEKSSFFSDSSKGKLGPKS.

It belongs to the PsbM family. In terms of assembly, PSII is composed of 1 copy each of membrane proteins PsbA, PsbB, PsbC, PsbD, PsbE, PsbF, PsbH, PsbI, PsbJ, PsbK, PsbL, PsbM, PsbT, PsbX, PsbY, Psb30/Ycf12, peripheral proteins PsbO, CyanoQ (PsbQ), PsbU, PsbV and a large number of cofactors. It forms dimeric complexes.

The protein resides in the cellular thylakoid membrane. In terms of biological role, one of the components of the core complex of photosystem II (PSII). PSII is a light-driven water:plastoquinone oxidoreductase that uses light energy to abstract electrons from H(2)O, generating O(2) and a proton gradient subsequently used for ATP formation. It consists of a core antenna complex that captures photons, and an electron transfer chain that converts photonic excitation into a charge separation. This subunit is found at the monomer-monomer interface. The chain is Photosystem II reaction center protein M from Prochlorococcus marinus (strain SARG / CCMP1375 / SS120).